The chain runs to 100 residues: Urease subunit gamma (100 aa).

Belongs to the urease gamma subunit family. Heterotrimer of UreA (gamma), UreB (beta) and UreC (alpha) subunits. Three heterotrimers associate to form the active enzyme.

The protein localises to the cytoplasm. It carries out the reaction urea + 2 H2O + H(+) = hydrogencarbonate + 2 NH4(+). The protein operates within nitrogen metabolism; urea degradation; CO(2) and NH(3) from urea (urease route): step 1/1. This is Urease subunit gamma from Sinorhizobium fredii (strain NBRC 101917 / NGR234).